A 175-amino-acid polypeptide reads, in one-letter code: Regenerating islet-derived protein 3-beta (175 aa).

A signal peptide spans 1 to 26 (MLPPTACSVMSWMLLSCLMLLSQVQG). Positions 27–37 (EDSLKNIPSAR) are excised as a propeptide. Intrachain disulfides connect C40/C51, C68/C171, and C146/C163. In terms of domain architecture, C-type lectin spans 47 to 172 (YGSYCYALFQ…CEVKLPYVCK (126 aa)). H107 provides a ligand contact to Zn(2+). An EPN motif is present at residues 114-116 (EPN). E121 lines the Zn(2+) pocket.

In terms of assembly, forms a hexameric membrane-permeabilizing oligomeric pore on membrane phospholipids. The hexamer is formed by three dimers related by helical symmetry. Forms filaments, filamentation traps pore complexes and limits damage to host cells. Interacts with EXTL3. Proteolytic processing by trypsin removes an inhibitory N-terminal propeptide and is essential for peptidoglycan binding and antibacterial activity. As to expression, constitutively expressed in the small intestine, moderately in colon and at an extremely low level in healthy pancreas.

The protein localises to the secreted. Lipopolysaccharide inhibits pore-forming activity, explaining why is bactericidal for Gram-positive but not Gram-negative bacteria. Functionally, bactericidal C-type lectin which acts against several intestinal Gram-positive and Gram-negative bacteria. Lacks antibacterial activity against S.typhimurium. May play a role in protection against infection with S.enteritidis by inhibiting its translocation from the gut lumen into intestinal tissues and further extraintestinal tissues. Its function is as follows. Acts as a hormone in response to different stimuli. Secreted by different cell types to activate its receptor EXTL3 and induce cell specific signaling pathways. In pancreas, is able stimulate cell proliferation. The chain is Regenerating islet-derived protein 3-beta from Mus musculus (Mouse).